Here is a 304-residue protein sequence, read N- to C-terminus: Carnitine monooxygenase reductase subunit (304 aa).

The 93-residue stretch at 1 to 93 (MEQLTPLIKR…SEPKNLFPLA (93 aa)) folds into the FAD-binding FR-type domain. The 2Fe-2S ferredoxin-type domain maps to 219–304 (FTVVLAKSNQ…AKGKKLVLDL (86 aa)). The [2Fe-2S] cluster site is built by Cys-253, Cys-258, Cys-261, and Cys-291.

The protein belongs to the PDR/VanB family. CntB subfamily. As to quaternary structure, composed of an oxygenase subunit and a reductase subunit. It depends on FMN as a cofactor. Requires [2Fe-2S] cluster as cofactor.

It catalyses the reaction (R)-carnitine + NADH + O2 + H(+) = (3R)-3-hydroxy-4-oxobutanoate + trimethylamine + NAD(+) + H2O. The enzyme catalyses (R)-carnitine + NADPH + O2 + H(+) = (3R)-3-hydroxy-4-oxobutanoate + trimethylamine + NADP(+) + H2O. It participates in amine and polyamine metabolism; carnitine metabolism. Inhibited by EDTA. Converts carnitine to trimethylamine and malic semialdehyde. Acts on both enantiomers. This is Carnitine monooxygenase reductase subunit from Acinetobacter pittii (strain PHEA-2).